We begin with the raw amino-acid sequence, 105 residues long: Guanidinium exporter (105 aa).

Position 1 (Met1) is a topological domain, cytoplasmic. The chain crosses the membrane as a helical span at residues Ser2 to Gly19. Over Leu20–Arg28 the chain is Periplasmic. The chain crosses the membrane as a helical span at residues Leu29 to Trp48. Topologically, residues Ala49–Pro54 are cytoplasmic. A helical transmembrane segment spans residues Val55–Leu77. The Periplasmic portion of the chain corresponds to Leu78–Arg86. A helical transmembrane segment spans residues Leu87–Thr104. A topological domain (cytoplasmic) is located at residue His105.

Belongs to the drug/metabolite transporter (DMT) superfamily. Small multidrug resistance (SMR) (TC 2.A.7.1) family. Gdx/SugE subfamily.

Its subcellular location is the cell inner membrane. In terms of biological role, guanidinium ion exporter. Couples guanidinium export to the proton motive force, exchanging one guanidinium ion for two protons. The protein is Guanidinium exporter of Citrobacter freundii.